A 470-amino-acid polypeptide reads, in one-letter code: Ribosomal protein uS12 methylthiotransferase RimO (470 aa).

Residues 1-27 (MPCQAPHSDSNVKNPSEATNQKDHSPR) form a disordered region. Positions 7 to 19 (HSDSNVKNPSEAT) are enriched in polar residues. Positions 26–141 (PRVGFVSLGC…VMQAVHTHLP (116 aa)) constitute an MTTase N-terminal domain. Positions 35, 71, 100, 172, 176, and 179 each coordinate [4Fe-4S] cluster. Residues 158–399 (LTPKHYAYLK…MEVAEAVSAR (242 aa)) enclose the Radical SAM core domain. A TRAM domain is found at 402 to 470 (QRKVGQTLRV…ADGHDLWGEV (69 aa)).

It belongs to the methylthiotransferase family. RimO subfamily. Requires [4Fe-4S] cluster as cofactor.

The protein localises to the cytoplasm. The enzyme catalyses L-aspartate(89)-[ribosomal protein uS12]-hydrogen + (sulfur carrier)-SH + AH2 + 2 S-adenosyl-L-methionine = 3-methylsulfanyl-L-aspartate(89)-[ribosomal protein uS12]-hydrogen + (sulfur carrier)-H + 5'-deoxyadenosine + L-methionine + A + S-adenosyl-L-homocysteine + 2 H(+). Catalyzes the methylthiolation of an aspartic acid residue of ribosomal protein uS12. This Cupriavidus taiwanensis (strain DSM 17343 / BCRC 17206 / CCUG 44338 / CIP 107171 / LMG 19424 / R1) (Ralstonia taiwanensis (strain LMG 19424)) protein is Ribosomal protein uS12 methylthiotransferase RimO.